The following is a 141-amino-acid chain: uncharacterized protein (141 aa).

This is an uncharacterized protein from Listeria innocua serovar 6a (strain ATCC BAA-680 / CLIP 11262).